Reading from the N-terminus, the 180-residue chain is ATP-dependent protease subunit HslV (180 aa).

Thr-7 is an active-site residue. Residues Gly-165, Cys-168, and Thr-171 each coordinate Na(+).

This sequence belongs to the peptidase T1B family. HslV subfamily. A double ring-shaped homohexamer of HslV is capped on each side by a ring-shaped HslU homohexamer. The assembly of the HslU/HslV complex is dependent on binding of ATP.

It localises to the cytoplasm. It carries out the reaction ATP-dependent cleavage of peptide bonds with broad specificity.. Allosterically activated by HslU binding. Functionally, protease subunit of a proteasome-like degradation complex believed to be a general protein degrading machinery. The polypeptide is ATP-dependent protease subunit HslV (Bacillus anthracis (strain A0248)).